Here is a 209-residue protein sequence, read N- to C-terminus: Thymidylate kinase (209 aa).

7–14 contacts ATP; it reads GVEGSGKS.

It belongs to the thymidylate kinase family.

It carries out the reaction dTMP + ATP = dTDP + ADP. In terms of biological role, phosphorylation of dTMP to form dTDP in both de novo and salvage pathways of dTTP synthesis. This chain is Thymidylate kinase, found in Solidesulfovibrio magneticus (strain ATCC 700980 / DSM 13731 / RS-1) (Desulfovibrio magneticus).